The following is a 461-amino-acid chain: Phytase A (461 aa).

Cys22 and Cys31 form a disulfide bridge. Positions 41, 42, 71, 72, 75, and 78 each coordinate 1D-myo-inositol hexakisphosphate. Cystine bridges form between Cys61/Cys405, Cys205/Cys456, Cys254/Cys272, and Cys427/Cys435. The active-site Nucleophile is His72. Asn95 and Asn110 each carry an N-linked (GlcNAc...) asparagine glycan. Residue Arg155 participates in 1D-myo-inositol hexakisphosphate binding. A glycan (N-linked (GlcNAc...) asparagine) is linked at Asn197. Lys291 is a 1D-myo-inositol hexakisphosphate binding site. 2 N-linked (GlcNAc...) asparagine glycosylation sites follow: Asn329 and Asn343. 2 residues coordinate 1D-myo-inositol hexakisphosphate: His352 and Asp353. Asn367 is a glycosylation site (N-linked (GlcNAc...) asparagine).

The protein belongs to the histidine acid phosphatase family. In terms of assembly, monomer. Post-translationally, glycosylated.

Its subcellular location is the secreted. The enzyme catalyses 1D-myo-inositol hexakisphosphate + H2O = 1D-myo-inositol 1,2,4,5,6-pentakisphosphate + phosphate. It carries out the reaction 1D-myo-inositol 1,2,4,5,6-pentakisphosphate + H2O = 1D-myo-inositol 1,2,5,6-tetrakisphosphate + phosphate. It catalyses the reaction 1D-myo-inositol 1,2,5,6-tetrakisphosphate + H2O = 1D-myo-inositol 1,2,6-trisphosphate + phosphate. The catalysed reaction is 1D-myo-inositol 1,2,6-trisphosphate + H2O = 1D-myo-inositol 1,2-bisphosphate + phosphate. The enzyme catalyses 1D-myo-inositol 1,2-bisphosphate + H2O = 1D-myo-inositol 2-phosphate + phosphate. Its function is as follows. Catalyzes the phosphate monoester hydrolysis of phytic acid (myo-inositol hexakisphosphate), which results in the stepwise formation of myo-inositol pentakis-, tetrakis-, tris-, bis-, and monophosphates, as well as the liberation of inorganic phosphate. Myo-inositol 2-monophosphate is the end product. In Penicillium oxalicum, this protein is Phytase A.